A 476-amino-acid polypeptide reads, in one-letter code: G-patch domain and KOW motifs-containing protein (476 aa).

The tract at residues 1–96 is disordered; it reads MADSKEGVLP…PGPSTDTGAL (96 aa). Ala-2 is modified (N-acetylalanine). Lys-5 participates in a covalent cross-link: Glycyl lysine isopeptide (Lys-Gly) (interchain with G-Cter in SUMO2). A compositionally biased stretch (polar residues) spans 13-26; it reads AASTAPISFGFTRT. Ser-27 bears the Phosphoserine; by PKA mark. Residues Ser-35 and Ser-42 each carry the phosphoserine modification. A compositionally biased stretch (basic and acidic residues) spans 43–58; that stretch reads PEEKDFLKTVEGRELQ. Ser-115 bears the Phosphoserine mark. In terms of domain architecture, G-patch spans 164-210; that stretch reads VEAYGLAMLRGMGWKPGEGIGRTFNQVVKPRVNSLRPKGLGLGANLT. Positions 203–244 are disordered; sequence LGLGANLTEAQALTPTGPSRMPRPDEEQEKDKEDQPQGLVPG. A compositionally biased stretch (polar residues) spans 210 to 219; sequence TEAQALTPTG. A Phosphothreonine modification is found at Thr-216. Positions 224–237 are enriched in basic and acidic residues; the sequence is PRPDEEQEKDKEDQ. Positions 240-267 constitute a KOW 1 domain; sequence GLVPGGAVVVLSGPHRGLYGKVEGLDPD. Thr-316 is modified (phosphothreonine; by PKA). The tract at residues 327–353 is disordered; sequence DNSERKRKHLPDRQDGPAAKSEKAAPR. Positions 337–351 are enriched in basic and acidic residues; it reads PDRQDGPAAKSEKAA. One can recognise a KOW 2 domain in the interval 415-442; it reads PKAEGDRVMVVLGPQTGRVGHLLSRDRA. Phosphoserine is present on Ser-471. The residue at position 473 (Thr-473) is a Phosphothreonine.

Belongs to the MOS2 family. In terms of assembly, component of the minor spliceosome, which splices U12-type introns. Interacts with PRKX. Interacts with DHX16. Interacts with PRKACB. Post-translationally, phosphorylation regulates its ability to bind RNA.

Its subcellular location is the nucleus. Its function is as follows. RNA-binding protein involved in pre-mRNA splicing. As a component of the minor spliceosome, involved in the splicing of U12-type introns in pre-mRNAs. This chain is G-patch domain and KOW motifs-containing protein (GPKOW), found in Homo sapiens (Human).